The primary structure comprises 79 residues: Acyl carrier protein (79 aa).

The 76-residue stretch at 2–77 folds into the Carrier domain; the sequence is SDIEARVRKI…SAIDYANTHQ (76 aa). Ser-37 is subject to O-(pantetheine 4'-phosphoryl)serine.

Belongs to the acyl carrier protein (ACP) family. In terms of processing, 4'-phosphopantetheine is transferred from CoA to a specific serine of apo-ACP by AcpS. This modification is essential for activity because fatty acids are bound in thioester linkage to the sulfhydryl of the prosthetic group.

Its subcellular location is the cytoplasm. It functions in the pathway lipid metabolism; fatty acid biosynthesis. Carrier of the growing fatty acid chain in fatty acid biosynthesis. This chain is Acyl carrier protein, found in Verminephrobacter eiseniae (strain EF01-2).